The following is a 271-amino-acid chain: Gap junction beta-5 protein (271 aa).

Residues 1 to 20 (MNWSVFEGLLSGVNKYSTAF) are Cytoplasmic-facing. The helical transmembrane segment at 21 to 40 (GRIWLSLVFVFRVLVYLVTA) threads the bilayer. The Extracellular segment spans residues 41-75 (ERVWGDDQKDFDCNTRQPGCTNVCYDEFFPVSHVR). Residues 76–98 (LWALQLILVTCPSLLVVMHVAYR) traverse the membrane as a helical segment. Residues 99-124 (KAREKKYQQEVGKGYLYPNPGKKRGG) are Cytoplasmic-facing. Residues 125–147 (LWWTYVCSLLFKATIDIIFLYLF) form a helical membrane-spanning segment. At 148-182 (HAFYPRYTLPSMVKCHSAPCPNTVDCFIAKPSEKN) the chain is on the extracellular side. The chain crosses the membrane as a helical span at residues 183-205 (IFIVFMLVTAIVCILLNLVELLY). Topologically, residues 206–271 (LVIKRCSECA…PRAHVKKTIL (66 aa)) are cytoplasmic. A disordered region spans residues 217–237 (AKRPPTAHAKNDPNWANPSSK).

This sequence belongs to the connexin family. Beta-type (group I) subfamily. As to quaternary structure, a connexon is composed of a hexamer of connexins. In terms of tissue distribution, expressed in skin.

The protein localises to the cell membrane. It is found in the cell junction. The protein resides in the gap junction. Functionally, one gap junction consists of a cluster of closely packed pairs of transmembrane channels, the connexons, through which materials of low MW diffuse from one cell to a neighboring cell. The polypeptide is Gap junction beta-5 protein (Gjb5) (Rattus norvegicus (Rat)).